A 612-amino-acid chain; its full sequence is Mineralocorticoid receptor (612 aa).

The modulating stretch occupies residues glycine 1–valine 228. Zn(2+) is bound by residues cysteine 229, cysteine 232, cysteine 246, cysteine 249, cysteine 269, cysteine 275, cysteine 285, and cysteine 288. 2 consecutive NR C4-type zinc fingers follow at residues cysteine 229–cysteine 249 and cysteine 269–cysteine 293. Residues cysteine 229–methionine 298 constitute a DNA-binding region (nuclear receptor). The interval asparagine 299–asparagine 349 is hinge. The interval lysine 310–serine 348 is disordered. Residues serine 339–serine 348 are compositionally biased toward low complexity. One can recognise an NR LBD domain in the interval serine 350–isoleucine 592. 2 residues coordinate 21-hydroxyprogesterone: asparagine 398 and glutamine 404. The aldosterone site is built by asparagine 398 and glutamine 404. Progesterone is bound by residues asparagine 398 and glutamine 404. An important for coactivator binding region spans residues lysine 410–lysine 413. 21-hydroxyprogesterone-binding residues include arginine 445 and threonine 573. Aldosterone is bound by residues arginine 445 and threonine 573. Progesterone is bound by residues arginine 445 and threonine 573.

Belongs to the nuclear hormone receptor family. NR3 subfamily.

The protein resides in the cytoplasm. The protein localises to the nucleus. In terms of biological role, receptor for both mineralocorticoids (MC) such as aldosterone and glucocorticoids (GC) such as corticosterone or cortisol. Binds to mineralocorticoid response elements (MRE) and transactivates target genes. The effect of MC is to increase ion and water transport and thus raise extracellular fluid volume and blood pressure and lower potassium levels. This is Mineralocorticoid receptor (nr3c2) from Xenopus laevis (African clawed frog).